We begin with the raw amino-acid sequence, 107 residues long: Prepilin peptidase-dependent protein C (107 aa).

A propeptide spanning residues 1–10 (MSASLKNQQG) is cleaved from the precursor. An N-methylphenylalanine modification is found at Phe-11. A helical transmembrane segment spans residues 11–30 (FSLPEVMLAMVLMVMIVTAL).

Its subcellular location is the membrane. Not yet known. This chain is Prepilin peptidase-dependent protein C (ppdC), found in Escherichia coli (strain K12).